The sequence spans 169 residues: Probable inosine/xanthosine triphosphatase (169 aa).

Residue Asp58 coordinates Mg(2+).

It belongs to the YjjX NTPase family. Homodimer. Mg(2+) is required as a cofactor. Mn(2+) serves as cofactor.

The enzyme catalyses XTP + H2O = XDP + phosphate + H(+). It catalyses the reaction ITP + H2O = IDP + phosphate + H(+). Phosphatase that hydrolyzes non-canonical purine nucleotides such as XTP and ITP to their respective diphosphate derivatives. Probably excludes non-canonical purines from DNA/RNA precursor pool, thus preventing their incorporation into DNA/RNA and avoiding chromosomal lesions. The chain is Probable inosine/xanthosine triphosphatase from Archaeoglobus fulgidus (strain ATCC 49558 / DSM 4304 / JCM 9628 / NBRC 100126 / VC-16).